The primary structure comprises 235 residues: Aspartate/glutamate leucyltransferase (235 aa).

It belongs to the R-transferase family. Bpt subfamily.

It is found in the cytoplasm. It carries out the reaction N-terminal L-glutamyl-[protein] + L-leucyl-tRNA(Leu) = N-terminal L-leucyl-L-glutamyl-[protein] + tRNA(Leu) + H(+). The catalysed reaction is N-terminal L-aspartyl-[protein] + L-leucyl-tRNA(Leu) = N-terminal L-leucyl-L-aspartyl-[protein] + tRNA(Leu) + H(+). Functionally, functions in the N-end rule pathway of protein degradation where it conjugates Leu from its aminoacyl-tRNA to the N-termini of proteins containing an N-terminal aspartate or glutamate. The polypeptide is Aspartate/glutamate leucyltransferase (Pseudomonas paraeruginosa (strain DSM 24068 / PA7) (Pseudomonas aeruginosa (strain PA7))).